We begin with the raw amino-acid sequence, 503 residues long: Splicing factor 3A subunit 3 (503 aa).

Disordered stretches follow at residues 296–317 (PALM…EHER) and 341–384 (ATKE…NPKN). Acidic residues predominate over residues 358 to 377 (DDSDVEASESDNEDDPDADD). Phosphoserine is present on residues Ser360, Ser365, and Ser367. The Matrin-type zinc-finger motif lies at 408–439 (YNCEICGNFTYKGPKAFQRHFAEWRHAHGMRC).

The protein belongs to the SF3A3 family. As to quaternary structure, probable component of a the U2 small nuclear ribonucleoproteins complex (U2 snRNP). As to expression, ubiquitous. In ovaries and testes, it is expressed in all germ and somatic cells. Highly expressed in spermatogonias and spermatocytes. Highly expressed in the germ cells of larval testes, while it is weakly expressed in fat body cells, in polyploid nuclei of salivary glands, and in larval brain.

The protein localises to the nucleus. Functionally, probable subunit of a splicing factor complex required for 'A' complex assembly formed by the stable binding of U2 snRNP to the branchpoint sequence (BPS) in pre-mRNA. Involved in male fertility. This chain is Splicing factor 3A subunit 3 (noi), found in Drosophila melanogaster (Fruit fly).